Here is a 354-residue protein sequence, read N- to C-terminus: Inactive ADP-ribosyltransferase ARH2 (354 aa).

Residue Ser27 is modified to Phosphoserine.

This sequence belongs to the ADP-ribosylglycohydrolase family.

Its subcellular location is the cytoplasm. The protein resides in the myofibril. It is found in the sarcomere. In terms of biological role, required for myofibril assembly and outgrowth of the cardiac chambers in the developing heart. Appears to be catalytically inactive, showing no activity against O-acetyl-ADP-ribose. The polypeptide is Inactive ADP-ribosyltransferase ARH2 (ADPRHL1) (Homo sapiens (Human)).